Here is a 285-residue protein sequence, read N- to C-terminus: MNKELESIYQNIANQSELGQTANYDSYYNPKRLYPIPRAPKRQEINLDPNSTTFYGFDCWNHYEVSWLNSKGKPVVAMAVISYDCHSPCIIESKSLKLYFNSLNNSTFPDVETVVQTISKDLSYCIGSEVAVNVYPLSDIPNQTIYAAFDGVCLDKLDIECSVYHVMPDFLSTSSELVEEVLYSDLLKSNCLVTNQPDWGSVQIIYKGKKINHEGLLKYLISFRNHNEFHEQCIERIFADIMRFCQPESLTVYGRYTRRGGLDINPIRSTEPCAFDGQNIRLIRQ.

91-93 (IES) contacts substrate. 93-94 (SK) serves as a coordination point for NADPH. The active-site Thioimide intermediate is the cysteine 191. The active-site Proton donor is the aspartate 198. 230-231 (HE) serves as a coordination point for substrate. NADPH is bound at residue 259-260 (RG).

The protein belongs to the GTP cyclohydrolase I family. QueF type 2 subfamily. In terms of assembly, homodimer.

The protein localises to the cytoplasm. The enzyme catalyses 7-aminomethyl-7-carbaguanine + 2 NADP(+) = 7-cyano-7-deazaguanine + 2 NADPH + 3 H(+). It functions in the pathway tRNA modification; tRNA-queuosine biosynthesis. Catalyzes the NADPH-dependent reduction of 7-cyano-7-deazaguanine (preQ0) to 7-aminomethyl-7-deazaguanine (preQ1). This chain is NADPH-dependent 7-cyano-7-deazaguanine reductase, found in Legionella pneumophila (strain Corby).